We begin with the raw amino-acid sequence, 381 residues long: Terpene cyclase ATR13 (381 aa).

It belongs to the terpene synthase family.

Its pathway is mycotoxin biosynthesis. Terpene cyclase; part of the core atranone cluster (CAC) which products are predicted to catalyze most or all steps of mycotoxin atranone synthesis, starting from geranylgeranyl pyrophosphate (GGPP). The initial cyclization of GGPP to dolabellane is probably performed by the terpene cyclase ATR13. The Baeyer-Villiger oxidation near the end of the atranone synthesis, which converts atranones D and E to atranones F and G is predicted to be catalyzed by the monooxygenase ATR8. Of the CAC's other predicted gene products, the reducing PKS ATR6 might synthesize a polyketide chain. This polyketide is probably transferred onto the atranone backbone by the polyketide transferase ATR5. Other predicted CAC products include 4 oxygenases (ATR2, ATR3, ATR4, and ATR14), 3 short-chain reductases (ATR7, ATR9, and ATR10), and a methyltransferase (ATR12). These may all be involved in the various steps of atranone biosynthesis, although their specific roles must await experimental determination. The chain is Terpene cyclase ATR13 from Stachybotrys chlorohalonatus (strain IBT 40285).